The chain runs to 573 residues: Probable zinc metallopeptidase EGY3, chloroplastic (573 aa).

A chloroplast-targeting transit peptide spans 1 to 50 (MASLFVSTPSSSLTLKSCHSLHLRRFDRAEFSNFGKASVNQTTRSRHSLR). Residues 38-105 (SVNQTTRSRH…EKKSKQQEMD (68 aa)) form a disordered region. Composition is skewed to basic and acidic residues over residues 52 to 62 (SAEDDRVREPV) and 96 to 105 (EKKSKQQEMD). The stretch at 122 to 185 (EAAIKLEKTR…KALDLNKLKS (64 aa)) forms a coiled coil. 7 helical membrane passes run 274-294 (VSAIALCVTTFGTIALMSGFF), 305-325 (IANVVPLFGGFLSILGVSEIA), 376-396 (ASAYLTSLLLAAAAFISDGSF), 414-434 (PLLSFVQFVVGPYADDLGNVL), 441-461 (VGVPVDPLAFAGLLGMVVTSL), 493-513 (LLLGIGGLSGSVLCLAWGLFA), and 536-556 (FAWGIVLGLICFLTLFPNSGG).

It belongs to the peptidase M50B family.

Its subcellular location is the plastid. The protein resides in the chloroplast membrane. Its function is as follows. Probable membrane-associated metalloprotease that may be involved in chloroplast development. This is Probable zinc metallopeptidase EGY3, chloroplastic (EGY3) from Arabidopsis thaliana (Mouse-ear cress).